We begin with the raw amino-acid sequence, 93 residues long: Small ribosomal subunit protein bS16 (93 aa).

It belongs to the bacterial ribosomal protein bS16 family.

The chain is Small ribosomal subunit protein bS16 from Roseiflexus castenholzii (strain DSM 13941 / HLO8).